The sequence spans 505 residues: Maturase K (505 aa).

The protein belongs to the intron maturase 2 family. MatK subfamily.

The protein localises to the plastid. It is found in the chloroplast. Its function is as follows. Usually encoded in the trnK tRNA gene intron. Probably assists in splicing its own and other chloroplast group II introns. The polypeptide is Maturase K (Spinacia oleracea (Spinach)).